Reading from the N-terminus, the 476-residue chain is Sulfate adenylyltransferase subunit 1 (476 aa).

A tr-type G domain is found at 25-241; that stretch reads KSLLRFLTCG…LETVEVQRVV (217 aa). Positions 34–41 are G1; the sequence is GSVDDGKS. 34–41 provides a ligand contact to GTP; that stretch reads GSVDDGKS. The segment at 92-96 is G2; it reads GITID. The segment at 113–116 is G3; the sequence is DTPG. Residues 113-117 and 168-171 contribute to the GTP site; these read DTPGH and NKMD. The tract at residues 168-171 is G4; sequence NKMD. Residues 206–208 form a G5 region; it reads SAL.

Belongs to the TRAFAC class translation factor GTPase superfamily. Classic translation factor GTPase family. CysN/NodQ subfamily. As to quaternary structure, heterodimer composed of CysD, the smaller subunit, and CysN.

It carries out the reaction sulfate + ATP + H(+) = adenosine 5'-phosphosulfate + diphosphate. The protein operates within sulfur metabolism; hydrogen sulfide biosynthesis; sulfite from sulfate: step 1/3. In terms of biological role, with CysD forms the ATP sulfurylase (ATPS) that catalyzes the adenylation of sulfate producing adenosine 5'-phosphosulfate (APS) and diphosphate, the first enzymatic step in sulfur assimilation pathway. APS synthesis involves the formation of a high-energy phosphoric-sulfuric acid anhydride bond driven by GTP hydrolysis by CysN coupled to ATP hydrolysis by CysD. This chain is Sulfate adenylyltransferase subunit 1, found in Erwinia tasmaniensis (strain DSM 17950 / CFBP 7177 / CIP 109463 / NCPPB 4357 / Et1/99).